Here is a 356-residue protein sequence, read N- to C-terminus: MSRPIVATINRAALRQNLAIARQAAGGSRLWSVVKANAYGHGIDRVWQSLAETDGFALLNLEEAILLRERGWKKPILLLEGFFHPADLEILDRYRLTTSVHSNWQIKALAEAKLSAPLDIYLKMNSGMNRLGFQPEQVNNAWQKLRSLKNVGELTLMAHFADAESTEGVAEPLKRIEQAAEGLECPRSLANSAATLWHPQTHHDWVRPGIILYGASPSGRWQDIAGSGLQPVMTLTSEIIGVQQLAAGSCVGYGSRYRASGSQRIGVVACGYADGYPRHAPTGTPIRVDGEMTQVVGAVSMDMITVDLTPCPQAGIGSQVELWGNSVKIDDVASASGTVGYELMCALAQRVPVQTE.

Lys35 serves as the catalytic Proton acceptor; specific for D-alanine. N6-(pyridoxal phosphate)lysine is present on Lys35. Residue Arg130 participates in substrate binding. Tyr253 functions as the Proton acceptor; specific for L-alanine in the catalytic mechanism. Met301 provides a ligand contact to substrate.

The protein belongs to the alanine racemase family. Pyridoxal 5'-phosphate serves as cofactor.

The catalysed reaction is L-alanine = D-alanine. Its pathway is amino-acid biosynthesis; D-alanine biosynthesis; D-alanine from L-alanine: step 1/1. In terms of biological role, catalyzes the interconversion of L-alanine and D-alanine. May also act on other amino acids. This Erwinia tasmaniensis (strain DSM 17950 / CFBP 7177 / CIP 109463 / NCPPB 4357 / Et1/99) protein is Alanine racemase (alr).